The sequence spans 886 residues: Cytosolic carboxypeptidase-like protein 5 (886 aa).

Residues tyrosine 157–alanine 570 form the Peptidase M14 domain. Positions 252 and 255 each coordinate Zn(2+). The segment covering serine 344–serine 354 has biased composition (low complexity). The interval serine 344 to aspartate 364 is disordered. A Zn(2+)-binding site is contributed by histidine 434. Catalysis depends on glutamate 516, which acts as the Proton donor/acceptor. Disordered regions lie at residues serine 605–lysine 734 and leucine 784–isoleucine 848. A compositionally biased stretch (polar residues) spans cysteine 631–arginine 640. Over residues serine 641 to serine 666 the composition is skewed to low complexity. Positions arginine 696–arginine 705 are enriched in basic and acidic residues. Low complexity predominate over residues proline 714 to serine 732. Serine 841 carries the post-translational modification Phosphoserine.

This sequence belongs to the peptidase M14 family. The cofactor is Zn(2+). In terms of tissue distribution, expressed in brain.

It is found in the cytoplasm. It localises to the cytosol. The protein resides in the nucleus. Its subcellular location is the cytoskeleton. The protein localises to the spindle. It is found in the midbody. The catalysed reaction is gamma-L-glutamyl-L-glutamyl-[protein] + H2O = L-glutamyl-[protein] + L-glutamate. It catalyses the reaction (L-glutamyl)(n+1)-gamma-L-glutamyl-L-glutamyl-[protein] + H2O = (L-glutamyl)(n)-gamma-L-glutamyl-L-glutamyl-[protein] + L-glutamate. It carries out the reaction C-terminal L-alpha-aminoacyl-L-glutamyl-[tubulin] + H2O = C-terminal L-alpha-aminoacyl-[tubulin] + L-glutamate. The enzyme catalyses C-terminal L-alpha-aminoacyl-L-glutamyl-L-glutamyl-[tubulin] + H2O = C-terminal L-alpha-aminoacyl-L-glutamyl-[tubulin] + L-glutamate. Metallocarboxypeptidase that mediates deglutamylation of tubulin and non-tubulin target proteins. Catalyzes the removal of polyglutamate side chains present on the gamma-carboxyl group of glutamate residues within the C-terminal tail of alpha- and beta-tubulin. Cleaves alpha- and gamma-linked polyglutamate tubulin side-chain, as well as the branching point glutamate. Also catalyzes the removal of alpha-linked glutamate residues from the carboxy-terminus of alpha-tubulin. Mediates deglutamylation of nucleotidyltransferase CGAS, leading to CGAS antiviral defense response activation. This chain is Cytosolic carboxypeptidase-like protein 5, found in Homo sapiens (Human).